A 323-amino-acid chain; its full sequence is Beta-ketoacyl-[acyl-carrier-protein] synthase III (323 aa).

Catalysis depends on residues Cys113 and His250. The tract at residues 251-255 is ACP-binding; that stretch reads QANKR. The active site involves Asn280.

It belongs to the thiolase-like superfamily. FabH family. Homodimer.

Its subcellular location is the cytoplasm. It carries out the reaction malonyl-[ACP] + acetyl-CoA + H(+) = 3-oxobutanoyl-[ACP] + CO2 + CoA. Its pathway is lipid metabolism; fatty acid biosynthesis. Functionally, catalyzes the condensation reaction of fatty acid synthesis by the addition to an acyl acceptor of two carbons from malonyl-ACP. Catalyzes the first condensation reaction which initiates fatty acid synthesis and may therefore play a role in governing the total rate of fatty acid production. Possesses both acetoacetyl-ACP synthase and acetyl transacylase activities. Its substrate specificity determines the biosynthesis of branched-chain and/or straight-chain of fatty acids. This is Beta-ketoacyl-[acyl-carrier-protein] synthase III from Brucella abortus biovar 1 (strain 9-941).